Consider the following 166-residue polypeptide: Lipoprotein signal peptidase (166 aa).

4 helical membrane passes run 10–30 (GGALAPWLGISLIVILFDQLT), 32–52 (IAVLKTFAYGAMHALTPFFNL), 71–91 (WQRWAFTALGIGATLVICYLL), and 100–120 (FSLSLALILGGALGNVIDRLI). Active-site residues include Asp-126 and Asp-144. The chain crosses the membrane as a helical span at residues 135–155 (WHWPAFNLADSAITVGAVLLI).

Belongs to the peptidase A8 family.

It localises to the cell inner membrane. The catalysed reaction is Release of signal peptides from bacterial membrane prolipoproteins. Hydrolyzes -Xaa-Yaa-Zaa-|-(S,diacylglyceryl)Cys-, in which Xaa is hydrophobic (preferably Leu), and Yaa (Ala or Ser) and Zaa (Gly or Ala) have small, neutral side chains.. Its pathway is protein modification; lipoprotein biosynthesis (signal peptide cleavage). Its function is as follows. This protein specifically catalyzes the removal of signal peptides from prolipoproteins. The sequence is that of Lipoprotein signal peptidase from Burkholderia mallei (strain ATCC 23344).